The primary structure comprises 475 residues: Ribulose bisphosphate carboxylase large chain (475 aa).

Residues 1-2 (MS) constitute a propeptide that is removed on maturation. At Pro3 the chain carries N-acetylproline. Lys14 carries the N6,N6,N6-trimethyllysine modification. Positions 123 and 173 each coordinate substrate. The active-site Proton acceptor is Lys175. Residue Lys177 participates in substrate binding. Mg(2+) is bound by residues Lys201, Asp203, and Glu204. Lys201 is modified (N6-carboxylysine). His294 (proton acceptor) is an active-site residue. Positions 295, 327, and 379 each coordinate substrate.

This sequence belongs to the RuBisCO large chain family. Type I subfamily. As to quaternary structure, heterohexadecamer of 8 large chains and 8 small chains; disulfide-linked. The disulfide link is formed within the large subunit homodimers. The cofactor is Mg(2+). In terms of processing, the disulfide bond which can form in the large chain dimeric partners within the hexadecamer appears to be associated with oxidative stress and protein turnover.

The protein resides in the plastid. It is found in the chloroplast. It carries out the reaction 2 (2R)-3-phosphoglycerate + 2 H(+) = D-ribulose 1,5-bisphosphate + CO2 + H2O. It catalyses the reaction D-ribulose 1,5-bisphosphate + O2 = 2-phosphoglycolate + (2R)-3-phosphoglycerate + 2 H(+). Its function is as follows. RuBisCO catalyzes two reactions: the carboxylation of D-ribulose 1,5-bisphosphate, the primary event in carbon dioxide fixation, as well as the oxidative fragmentation of the pentose substrate in the photorespiration process. Both reactions occur simultaneously and in competition at the same active site. In Larix occidentalis (Western larch), this protein is Ribulose bisphosphate carboxylase large chain.